The chain runs to 300 residues: GTPase Era (300 aa).

The region spanning 8–176 is the Era-type G domain; the sequence is RCGYVAIVGR…ERLVAGRLPQ (169 aa). A G1 region spans residues 16-23; the sequence is GRPNVGKS. 16 to 23 serves as a coordination point for GTP; the sequence is GRPNVGKS. A G2 region spans residues 42-46; sequence QTTRH. The interval 63–66 is G3; sequence DTPG. Residues 63 to 67 and 125 to 128 each bind GTP; these read DTPGL and NKAD. Positions 125–128 are G4; it reads NKAD. Residues 155 to 157 are G5; the sequence is ISA. The 85-residue stretch at 199–283 folds into the KH type-2 domain; that stretch reads VREKIMRQLG…MLNLWVKVKG (85 aa).

The protein belongs to the TRAFAC class TrmE-Era-EngA-EngB-Septin-like GTPase superfamily. Era GTPase family. In terms of assembly, monomer.

It localises to the cytoplasm. The protein resides in the cell inner membrane. Its function is as follows. An essential GTPase that binds both GDP and GTP, with rapid nucleotide exchange. Plays a role in 16S rRNA processing and 30S ribosomal subunit biogenesis and possibly also in cell cycle regulation and energy metabolism. This Azotobacter vinelandii (strain DJ / ATCC BAA-1303) protein is GTPase Era.